Here is a 745-residue protein sequence, read N- to C-terminus: Heterogeneous nuclear ribonucleoprotein U-like protein 2 (745 aa).

Residues 3-37 enclose the SAP domain; the sequence is VKRLKVTELRSELQRRGLDSRGLKMDLAQRLQEAL. Disordered regions lie at residues 44-239 and 625-664; these read DEAG…DEEE and EEARKLLPPSEKRTNRRNNRNKRNRQNRSRGQGYVGGQRR. The segment covering 73-97 has biased composition (acidic residues); it reads GDEEEEDDDEEEDEEALLEDEDEEP. Residues 142–161 show a composition bias toward basic and acidic residues; it reads GEEHDNGKGEEDGPEERSGD. Ser159 is subject to Phosphoserine. At Thr163 the chain carries Phosphothreonine. Phosphoserine is present on residues Ser166, Ser183, Ser186, Ser224, and Ser226. Residues 183–221 are compositionally biased toward basic and acidic residues; that stretch reads SEKSKPAGSDGERRGVKRQRDEKDEHGRAYYEFREEAYH. Residues 224–417 enclose the B30.2/SPRY domain; that stretch reads SKSPPPPEEE…VELNFGQKEE (194 aa). Residues 230 to 239 are compositionally biased toward acidic residues; sequence PEEEAKDEEE. The span at 625 to 637 shows a compositional bias: basic and acidic residues; it reads EEARKLLPPSEKR. Over residues 638 to 652 the composition is skewed to basic residues; the sequence is TNRRNNRNKRNRQNR. Residues Arg654, Arg682, Arg736, and Arg745 each carry the omega-N-methylarginine modification.

Binds to MLF1 and retains it in the nucleus.

It localises to the nucleus. The chain is Heterogeneous nuclear ribonucleoprotein U-like protein 2 (Hnrnpul2) from Mus musculus (Mouse).